Consider the following 468-residue polypeptide: 3-isopropylmalate dehydratase large subunit (468 aa).

Positions 349, 409, and 412 each coordinate [4Fe-4S] cluster.

It belongs to the aconitase/IPM isomerase family. LeuC type 1 subfamily. As to quaternary structure, heterodimer of LeuC and LeuD. The cofactor is [4Fe-4S] cluster.

It catalyses the reaction (2R,3S)-3-isopropylmalate = (2S)-2-isopropylmalate. The protein operates within amino-acid biosynthesis; L-leucine biosynthesis; L-leucine from 3-methyl-2-oxobutanoate: step 2/4. In terms of biological role, catalyzes the isomerization between 2-isopropylmalate and 3-isopropylmalate, via the formation of 2-isopropylmaleate. This Shewanella baltica (strain OS155 / ATCC BAA-1091) protein is 3-isopropylmalate dehydratase large subunit.